The chain runs to 692 residues: A-kinase anchor protein 8 (692 aa).

An interaction with MCM2 region spans residues 1–195; sequence MDQGYGGYGA…FMRGRGQGRF (195 aa). Residues 1-210 are interaction with DPY30; the sequence is MDQGYGGYGA…PGTFMRSDPF (210 aa). R109 bears the Asymmetric dimethylarginine; alternate mark. R109 bears the Omega-N-methylarginine; alternate mark. An interaction with DDX5 region spans residues 109–201; the sequence is RGGSGGGGEG…QGRFQDRSNP (93 aa). At S112 the chain carries Phosphoserine. Disordered regions lie at residues 168–203, 231–254, and 269–382; these read GQYSECRDPARERGSLDGFMRGRGQGRFQDRSNPGT, GGRGLGGPSPSRPPPSLFSQSMAP, and STMP…RTRD. Residues 172 to 182 show a composition bias toward basic and acidic residues; sequence ECRDPARERGS. S199 bears the Phosphoserine mark. Omega-N-methylarginine is present on residues R233 and R277. Composition is skewed to basic and acidic residues over residues 281–297 and 314–323; these read RMRDRDRPKRRGFDRFG and PDTKLARVDS. The Bipartite nuclear localization signal signature appears at 289-306; that stretch reads KRRGFDRFGPDGTGRKRK. A Glycyl lysine isopeptide (Lys-Gly) (interchain with G-Cter in SUMO2) cross-link involves residue K317. Phosphoserine occurs at positions 323, 328, and 339. Residues 324–334 show a composition bias toward acidic residues; the sequence is EGDFSENDDAA. Residues 387-450 form an involved in chromatin-binding region; the sequence is RIQFACSVCK…NKKIEKRRQE (64 aa). C2H2 AKAP95-type zinc fingers lie at residues 392–414 and 481–504; these read CSVCKFRSFDDEEIQKHLQSKFH and CLACDMLIPAQPQLLQRHLHSVDH. An involved in condensin complex recruitment region spans residues 525-569; that stretch reads SVLNNRHIVKMLEKYLKGEDPFTSETVDPEMEGDDNLGGEDKKET. The tract at residues 545-571 is disordered; sequence PFTSETVDPEMEGDDNLGGEDKKETPE. Over residues 551-562 the composition is skewed to acidic residues; that stretch reads VDPEMEGDDNLG. A Glycyl lysine isopeptide (Lys-Gly) (interchain with G-Cter in SUMO2) cross-link involves residue K567. The RII-binding stretch occupies residues 572-589; the sequence is EVAADVLAEVITAAVRAV. The interval 576–593 is required for interaction with MYCBP; that stretch reads DVLAEVITAAVRAVDGEG. A disordered region spans residues 592–692; that stretch reads EGAPAPESSG…AESKDAVPTE (101 aa). Over residues 634-646 the composition is skewed to basic and acidic residues; that stretch reads AHEKGVPKARSEA. The residue at position 662 (S662) is a Phosphoserine. The span at 663–675 shows a compositional bias: low complexity; it reads AQTRVAPAPAAAD. Positions 683–692 are enriched in basic and acidic residues; that stretch reads AESKDAVPTE. A Phosphoserine modification is found at S685.

This sequence belongs to the AKAP95 family. Binds to the PKA RII-alpha regulatory subunit PRKAR2A (phosphorylated at 'Thr-54') during mitosis. Interacts (via C-terminus) with FIGN. Interacts with NCAPD2, CCND1, MCM2, RPS6KA1, PDE4A. Interacts with CCND3, CCNE1, DDX5, CASP3. Interacts with NFKB1; detetcted in the cytoplasm. Interacts with MYCBP; MYCBP is translocated to the nucleus and the interaction prevents the association of the PKA catalytic subunit leading to suppression of PKA activity. Interacts with DPY30; mediating AKAP8 association with at least the MLL4/WBP7 HMT complex. Interacts with HDAC3; increased during mitosis. Interacts with GJA1; in the nucleus and in the nuclear membrane; the nuclear association increases with progress of cell cycle G1, S and G2 phase and decreases in M phase. In terms of processing, phosphorylated on tyrosine residues probably by SRC subfamily protein kinases; multiple phosphorylation is leading to dissociation from nuclear structures implicated in chromatin structural changes. As to expression, highly expressed in heart, liver, skeletal muscle, kidney and pancreas. Expressed in mature dendritic cells.

It is found in the nucleus. The protein resides in the nucleus matrix. The protein localises to the nucleolus. It localises to the cytoplasm. Its function is as follows. Anchoring protein that mediates the subcellular compartmentation of cAMP-dependent protein kinase (PKA type II). Acts as an anchor for a PKA-signaling complex onto mitotic chromosomes, which is required for maintenance of chromosomes in a condensed form throughout mitosis. Recruits condensin complex subunit NCAPD2 to chromosomes required for chromatin condensation; the function appears to be independent from PKA-anchoring. May help to deliver cyclin D/E to CDK4 to facilitate cell cycle progression. Required for cell cycle G2/M transition and histone deacetylation during mitosis. In mitotic cells recruits HDAC3 to the vicinity of chromatin leading to deacetylation and subsequent phosphorylation at 'Ser-10' of histone H3; in this function may act redundantly with AKAP8L. Involved in nuclear retention of RPS6KA1 upon ERK activation thus inducing cell proliferation. May be involved in regulation of DNA replication by acting as scaffold for MCM2. Enhances HMT activity of the KMT2 family MLL4/WBP7 complex and is involved in transcriptional regulation. In a teratocarcinoma cell line is involved in retinoic acid-mediated induction of developmental genes implicating H3 'Lys-4' methylation. May be involved in recruitment of active CASP3 to the nucleus in apoptotic cells. May act as a carrier protein of GJA1 for its transport to the nucleus. May play a repressive role in the regulation of rDNA transcription. Preferentially binds GC-rich DNA in vitro. In cells, associates with ribosomal RNA (rRNA) chromatin, preferentially with rRNA promoter and transcribed regions. Involved in modulation of Toll-like receptor signaling. Required for the cAMP-dependent suppression of TNF-alpha in early stages of LPS-induced macrophage activation; the function probably implicates targeting of PKA to NFKB1. This is A-kinase anchor protein 8 (AKAP8) from Homo sapiens (Human).